The sequence spans 371 residues: tRNA-specific 2-thiouridylase MnmA (371 aa).

ATP contacts are provided by residues 11 to 18 and M37; that span reads GMSGGVDS. An interaction with target base in tRNA region spans residues 97–99; the sequence is NPD. C102 functions as the Nucleophile in the catalytic mechanism. C102 and C199 are disulfide-bonded. Residue G127 participates in ATP binding. The interaction with tRNA stretch occupies residues 149–151; it reads KDQ. C199 serves as the catalytic Cysteine persulfide intermediate. The segment at 311–312 is interaction with tRNA; sequence RY.

The protein belongs to the MnmA/TRMU family.

It is found in the cytoplasm. The catalysed reaction is S-sulfanyl-L-cysteinyl-[protein] + uridine(34) in tRNA + AH2 + ATP = 2-thiouridine(34) in tRNA + L-cysteinyl-[protein] + A + AMP + diphosphate + H(+). In terms of biological role, catalyzes the 2-thiolation of uridine at the wobble position (U34) of tRNA, leading to the formation of s(2)U34. The chain is tRNA-specific 2-thiouridylase MnmA from Idiomarina loihiensis (strain ATCC BAA-735 / DSM 15497 / L2-TR).